The chain runs to 361 residues: MSKFSFNIHHQHKKARSGIIATAHGEIRTPAFMPVGTRGTVKAMLPESVAETGADILLGNTYHLMLQPSAERIARLGGLHKFMNWDKPILTDSGGFQVMSLSKLRKITEEGVSFSSHINGDKYMLTPERSTAIQYLLGSTITMAFDECTPYPVTFEEAKTSMQLTTRWAHRSRNAFVKREGYAQFGIIQGSVYEELREQSAKGLVELDFDGYAIGGLAVGEGQELMFKVLDYAPDFLPQNKPRYLMGVGKPADIIGAVNRGIDMFDCVIPTRSGRNGQAFTKYGTVNICNSKYSGDNEPLEHDCPCPACTNYTKAYLHHLVRIGEILGSMLMTWHNLTYFQNLISRIREYIKLGKDFDFYS.

Asp92 acts as the Proton acceptor in catalysis. Substrate contacts are provided by residues 92-96, Asp146, Gln189, and Gly216; that span reads DSGGF. The segment at 247-253 is RNA binding; sequence GVGKPAD. Asp266 acts as the Nucleophile in catalysis. The segment at 271–275 is RNA binding; important for wobble base 34 recognition; sequence TRSGR. 4 residues coordinate Zn(2+): Cys304, Cys306, Cys309, and His335.

Belongs to the queuine tRNA-ribosyltransferase family. Homodimer. Within each dimer, one monomer is responsible for RNA recognition and catalysis, while the other monomer binds to the replacement base PreQ1. Zn(2+) is required as a cofactor.

The catalysed reaction is 7-aminomethyl-7-carbaguanine + guanosine(34) in tRNA = 7-aminomethyl-7-carbaguanosine(34) in tRNA + guanine. The protein operates within tRNA modification; tRNA-queuosine biosynthesis. Functionally, catalyzes the base-exchange of a guanine (G) residue with the queuine precursor 7-aminomethyl-7-deazaguanine (PreQ1) at position 34 (anticodon wobble position) in tRNAs with GU(N) anticodons (tRNA-Asp, -Asn, -His and -Tyr). Catalysis occurs through a double-displacement mechanism. The nucleophile active site attacks the C1' of nucleotide 34 to detach the guanine base from the RNA, forming a covalent enzyme-RNA intermediate. The proton acceptor active site deprotonates the incoming PreQ1, allowing a nucleophilic attack on the C1' of the ribose to form the product. After dissociation, two additional enzymatic reactions on the tRNA convert PreQ1 to queuine (Q), resulting in the hypermodified nucleoside queuosine (7-(((4,5-cis-dihydroxy-2-cyclopenten-1-yl)amino)methyl)-7-deazaguanosine). The chain is Queuine tRNA-ribosyltransferase from Rickettsia akari (strain Hartford).